The following is a 295-amino-acid chain: Ribosomal protein L11 methyltransferase (295 aa).

S-adenosyl-L-methionine is bound by residues Thr145, Gly166, Asp188, and Asn230.

This sequence belongs to the methyltransferase superfamily. PrmA family.

Its subcellular location is the cytoplasm. It catalyses the reaction L-lysyl-[protein] + 3 S-adenosyl-L-methionine = N(6),N(6),N(6)-trimethyl-L-lysyl-[protein] + 3 S-adenosyl-L-homocysteine + 3 H(+). Its function is as follows. Methylates ribosomal protein L11. The chain is Ribosomal protein L11 methyltransferase from Pectobacterium atrosepticum (strain SCRI 1043 / ATCC BAA-672) (Erwinia carotovora subsp. atroseptica).